Here is a 363-residue protein sequence, read N- to C-terminus: Flagellar P-ring protein (363 aa).

The signal sequence occupies residues 1–20 (MKKLTLVLFGMLFLASSAHA).

It belongs to the FlgI family. As to quaternary structure, the basal body constitutes a major portion of the flagellar organelle and consists of four rings (L,P,S, and M) mounted on a central rod.

It localises to the periplasm. Its subcellular location is the bacterial flagellum basal body. In terms of biological role, assembles around the rod to form the L-ring and probably protects the motor/basal body from shearing forces during rotation. In Vibrio atlanticus (strain LGP32) (Vibrio splendidus (strain Mel32)), this protein is Flagellar P-ring protein.